A 1270-amino-acid polypeptide reads, in one-letter code: Activating transcription factor 7-interacting protein 1 (1270 aa).

Methionine 1 is modified (N-acetylmethionine). Residue lysine 33 forms a Glycyl lysine isopeptide (Lys-Gly) (interchain with G-Cter in SUMO2) linkage. Phosphoserine occurs at positions 57 and 113. Disordered regions lie at residues 104 to 223 (DDDL…ISGD) and 235 to 402 (TSVD…EDET). Threonine 118 carries the post-translational modification Phosphothreonine. Composition is skewed to low complexity over residues 132–203 (GDPA…SSGD) and 248–269 (DPAS…SDDL). Basic and acidic residues-rich tracts occupy residues 310 to 327 (SNKD…EKLE) and 333 to 343 (DSLDEKNKADN). Residues 347–356 (ANEETLETDD) show a composition bias toward acidic residues. Residues 363 to 373 (RPPENEKKVEE) are compositionally biased toward basic and acidic residues. Residues serine 445, serine 473, serine 474, serine 477, serine 479, and serine 496 each carry the phosphoserine modification. Disordered regions lie at residues 455 to 570 (TSLL…SKRR), 658 to 685 (EDLK…NSNN), 822 to 862 (PPTV…PTAS), and 886 to 906 (RTSL…NRGP). Residues 474–486 (SFGSPSKQESSES) show a composition bias toward polar residues. Acidic residues predominate over residues 496–509 (SDEEDISGEKDESE). Residues 524–552 (SNEKDNKPEEEEQVIHEDDERPSEKNEFS) are compositionally biased toward basic and acidic residues. The Nuclear localization signal motif lies at 553–571 (RRKRSKSEDMDNVQSKRRR). A Glycyl lysine isopeptide (Lys-Gly) (interchain with G-Cter in SUMO2) cross-link involves residue lysine 558. Serine 559 carries the post-translational modification Phosphoserine. The tract at residues 562–817 (MDNVQSKRRR…NQPSGNVEFI (256 aa)) is interaction with SETDB1. A coiled-coil region spans residues 617–665 (KTLAELKTRVEKIECNKRHKTVLTELQAKIARLTKRFEAAKEDLKKRHE). At serine 673 the chain carries Phosphoserine. Residues 822–834 (PPTVSGLTKNPVS) are compositionally biased toward polar residues. The segment covering 843-854 (KPNNVPSVPSPS) has biased composition (low complexity). A Phosphoserine modification is found at serine 899. Residues lysine 910 and lysine 938 each participate in a glycyl lysine isopeptide (Lys-Gly) (interchain with G-Cter in SUMO2) cross-link. Polar residues-rich tracts occupy residues 918 to 942 (TSSA…TIDA) and 950 to 964 (DSTS…SDSS). Disordered stretches follow at residues 918 to 1026 (TSSA…SQTT) and 1115 to 1160 (STGP…STSL). Residues 965 to 975 (GVIDLTMDDEE) form an interaction with SUMO region. Composition is skewed to polar residues over residues 988 to 999 (TPVSTMSSSQPV) and 1016 to 1026 (GVPTSGPSQTT). Over residues 1134 to 1151 (PRPVHPAPLPEAPQPQRL) the composition is skewed to pro residues. Positions 1154–1270 (EAASTSLPQK…TDVISSTQSS (117 aa)) are interaction with MBD1. The 111-residue stretch at 1160–1270 (LPQKPHLKLA…TDVISSTQSS (111 aa)) folds into the Fibronectin type-III domain.

It belongs to the MCAF family. Interacts with MBD1; the interaction is enhanced when MBD1 is sumoylated. Interacts with SETDB1; the interaction protects SETDB1 from proteasomal degradation and is required to stimulate histone methyltransferase activity and facilitate the conversion of dimethylated to trimethylated H3 'Lys-9'. Interacts with SUMO ubiquitin-like proteins (SUMO1, SUNO2 and SUMO3), with a preference for SUMO2 and SUMO3. Interacts with SP1, ATF7 and ZHX1. Interacts with the general transcription machinery, including ERCC2, ERCC3, GTF2E1, GTF2E2 and POLR2A. As to quaternary structure, (Microbial infection) Interacts with Epstein-Barr virus BRLF1/Rta protein, leading to the regulation of host genes in Epstein-Barr virus-infected cells. In terms of tissue distribution, detected at low levels in breast, lung and stomach; highly up-regulated in the corresponding cancerous tissues (at protein level).

It localises to the nucleus. Functionally, recruiter that couples transcriptional factors to general transcription apparatus and thereby modulates transcription regulation and chromatin formation. Can both act as an activator or a repressor depending on the context. Required for HUSH-mediated heterochromatin formation and gene silencing. Mediates MBD1-dependent transcriptional repression, probably by recruiting complexes containing SETDB1. Stabilizes SETDB1, is required to stimulate histone methyltransferase activity of SETDB1 and facilitates the conversion of dimethylated to trimethylated H3 'Lys-9' (H3K9me3). The complex formed with MBD1 and SETDB1 represses transcription and couples DNA methylation and histone H3 'Lys-9' trimethylation (H3K9me3). Facilitates telomerase TERT and TERC gene expression by SP1 in cancer cells. The chain is Activating transcription factor 7-interacting protein 1 from Homo sapiens (Human).